The primary structure comprises 1427 residues: Lysophospholipase NTE1 (1427 aa).

Over 1–60 the chain is Cytoplasmic; sequence MDSLHVSSTSVLVDVVEAVETATSLVVDTAEAVATEQATPTAVISNALARSAYAAHTSLS. Residues 61-81 traverse the membrane as a helical segment; that stretch reads YLAWAFGLWFLRLIGWVCYGI. At 82-96 the chain is on the lumenal side; it reads PTYVLGLLGRTINIS. A helical membrane pass occupies residues 97-117; it reads LQFSSLLLILIALVTVVVAVV. The Cytoplasmic portion of the chain corresponds to 118–1427; the sequence is RYKYLTVYSR…KRTIARRNSI (1310 aa). The segment covering 281-296 has biased composition (polar residues); sequence PMTSASDVPNMSLSSD. The segment at 281-315 is disordered; the sequence is PMTSASDVPNMSLSSDGSDDLQKGEPQFGEPRLSE. Residues 615-735 and 731-870 each bind a nucleoside 3',5'-cyclic phosphate; these read LMAA…LTKV and SLTK…VASR. The disordered stretch occupies residues 787–807; the sequence is GIVGGESGDAKDGKSHRKNLT. Residues 1124–1288 enclose the PNPLA domain; the sequence is LVLGGGGARG…VDNLPVSEMK (165 aa). Residues 1128–1133 carry the GXGXXG motif; that stretch reads GGGARG. Positions 1155 to 1159 match the GXSXG motif; sequence GTSIG. Ser-1157 (nucleophile) is an active-site residue. Asp-1275 acts as the Proton acceptor in catalysis. The short motif at 1275–1277 is the DGA/G element; it reads DGG.

This sequence belongs to the NTE family.

It is found in the endoplasmic reticulum membrane. The catalysed reaction is a 1-acyl-sn-glycero-3-phosphocholine + H2O = sn-glycerol 3-phosphocholine + a fatty acid + H(+). With respect to regulation, inhibited by organophosphorus esters. Its function is as follows. Intracellular phospholipase B that catalyzes the double deacylation of phosphatidylcholine (PC) to glycerophosphocholine (GroPCho). Plays an important role in membrane lipid homeostasis. Responsible for the rapid PC turnover in response to inositol, elevated temperatures, or when choline is present in the growth medium. This Yarrowia lipolytica (strain CLIB 122 / E 150) (Yeast) protein is Lysophospholipase NTE1 (NTE1).